The chain runs to 106 residues: Immunoglobulin lambda constant 2 (106 aa).

Positions 7-101 (PSVTLFPPSS…EGSTVEKTVA (95 aa)) constitute an Ig-like domain. Cys28 and Cys87 are oxidised to a cystine.

In terms of assembly, immunoglobulins are composed of two identical heavy chains and two identical light chains; disulfide-linked.

It localises to the secreted. Its subcellular location is the cell membrane. Constant region of immunoglobulin light chains. Immunoglobulins, also known as antibodies, are membrane-bound or secreted glycoproteins produced by B lymphocytes. In the recognition phase of humoral immunity, the membrane-bound immunoglobulins serve as receptors which, upon binding of a specific antigen, trigger the clonal expansion and differentiation of B lymphocytes into immunoglobulins-secreting plasma cells. Secreted immunoglobulins mediate the effector phase of humoral immunity, which results in the elimination of bound antigens. The antigen binding site is formed by the variable domain of one heavy chain, together with that of its associated light chain. Thus, each immunoglobulin has two antigen binding sites with remarkable affinity for a particular antigen. The variable domains are assembled by a process called V-(D)-J rearrangement and can then be subjected to somatic hypermutations which, after exposure to antigen and selection, allow affinity maturation for a particular antigen. The chain is Immunoglobulin lambda constant 2 from Homo sapiens (Human).